The following is a 227-amino-acid chain: tRNA (guanine-N(7)-)-methyltransferase (227 aa).

Residues 1-21 (MPDMTMKSQPDRLYGRQRGHA) form a disordered region. The S-adenosyl-L-methionine site is built by Glu-54, Glu-79, Asp-114, and Asp-136. Asp-136 is a catalytic residue. Substrate contacts are provided by residues Lys-140, Asp-172, and 206–209 (TRYE).

Belongs to the class I-like SAM-binding methyltransferase superfamily. TrmB family.

It catalyses the reaction guanosine(46) in tRNA + S-adenosyl-L-methionine = N(7)-methylguanosine(46) in tRNA + S-adenosyl-L-homocysteine. Its pathway is tRNA modification; N(7)-methylguanine-tRNA biosynthesis. Its function is as follows. Catalyzes the formation of N(7)-methylguanine at position 46 (m7G46) in tRNA. The polypeptide is tRNA (guanine-N(7)-)-methyltransferase (Granulibacter bethesdensis (strain ATCC BAA-1260 / CGDNIH1)).